Here is a 196-residue protein sequence, read N- to C-terminus: Imidazoleglycerol-phosphate dehydratase (196 aa).

Belongs to the imidazoleglycerol-phosphate dehydratase family.

The protein localises to the cytoplasm. The catalysed reaction is D-erythro-1-(imidazol-4-yl)glycerol 3-phosphate = 3-(imidazol-4-yl)-2-oxopropyl phosphate + H2O. Its pathway is amino-acid biosynthesis; L-histidine biosynthesis; L-histidine from 5-phospho-alpha-D-ribose 1-diphosphate: step 6/9. The chain is Imidazoleglycerol-phosphate dehydratase from Clostridium botulinum (strain 657 / Type Ba4).